The following is a 717-amino-acid chain: F-box only protein 42 (717 aa).

Over residues 1 to 30 (MASSSDSEDDSFMAVDQEETVLEGTMEQDE) the composition is skewed to acidic residues. Positions 1–47 (MASSSDSEDDSFMAVDQEETVLEGTMEQDEEPHPVLEAEETRHNRSM) are disordered. Residues 31 to 43 (EPHPVLEAEETRH) show a composition bias toward basic and acidic residues. An F-box domain is found at 44–93 (NRSMSELPEEVLEYILSFLSPYQEHKTAALVCKQWYRLIKGVAHQCYHGF). Kelch repeat units follow at residues 132-184 (SMYV…VYKD), 186-242 (LVLF…VIDD), 244-293 (MIVF…VIDD), and 295-342 (TILI…LWCH). 2 disordered regions span residues 361 to 472 (RAPL…SAAE) and 508 to 539 (PASS…GVHT). Residues 363 to 376 (PLSPSLNSRPSPIS) show a composition bias toward low complexity. A phosphoserine mark is found at S365 and S373. T378 is modified (phosphothreonine). Polar residues-rich tracts occupy residues 416–426 (QRQTPSGSREG) and 455–469 (SLDS…STPS). S552 carries the phosphoserine modification. The span at 570–596 (GPSASAALSPPLGSSPGSPGSQSLSSG) shows a compositional bias: low complexity. A disordered region spans residues 570–635 (GPSASAALSP…PQSLNVGKPL (66 aa)).

In terms of assembly, component of some SCF complex, composed of CUL1, SKP1, RBX1 and FBXO42. Interacts (via the kelch domain) with p53/TP53; interaction is direct.

Substrate-recognition component of some SCF (SKP1-CUL1-F-box protein)-type E3 ubiquitin ligase complex. Specifically recognizes p53/TP53, promoting its ubiquitination and degradation. This is F-box only protein 42 (FBXO42) from Pongo abelii (Sumatran orangutan).